A 470-amino-acid polypeptide reads, in one-letter code: Neuraminidase (470 aa).

At 1–6 (MNPNQK) the chain is on the intravirion side. Residues 7-27 (IITIGSICMAIGIISLILQMG) form a helical membrane-spanning segment. The segment at 11–33 (GSICMAIGIISLILQMGNIISIW) is involved in apical transport and lipid raft association. Residues 28-470 (NIISIWVSHS…GAELPFTIDK (443 aa)) are Virion surface-facing. The tract at residues 36 to 90 (HSIQTGSQNHTGICNQRIITYENSTWVNQTYVNINNTNVVAGKDTTSVTLAGNSS) is hypervariable stalk region. 5 N-linked (GlcNAc...) asparagine; by host glycosylation sites follow: N44, N58, N63, N70, and N88. The tract at residues 91 to 470 (LCPIRGWAIY…GAELPFTIDK (380 aa)) is head of neuraminidase. Intrachain disulfides connect C92/C417, C124/C129, C184/C231, C233/C238, C279/C292, C281/C290, C318/C335, and C421/C447. Residue R118 coordinates substrate. An N-linked (GlcNAc...) asparagine; by host glycan is attached at N146. The Proton donor/acceptor role is filled by D151. A substrate-binding site is contributed by R152. An N-linked (GlcNAc...) asparagine; by host glycan is attached at N235. Residue 277–278 (EE) participates in substrate binding. R293 contacts substrate. Ca(2+) contacts are provided by D294, G298, and D324. An N-linked (GlcNAc...) asparagine; by host glycan is attached at N365. R368 is a binding site for substrate. The active-site Nucleophile is the Y402. N455 is a glycosylation site (N-linked (GlcNAc...) asparagine; by host).

Belongs to the glycosyl hydrolase 34 family. Homotetramer. Ca(2+) serves as cofactor. Post-translationally, N-glycosylated.

Its subcellular location is the virion membrane. The protein localises to the host apical cell membrane. The enzyme catalyses Hydrolysis of alpha-(2-&gt;3)-, alpha-(2-&gt;6)-, alpha-(2-&gt;8)- glycosidic linkages of terminal sialic acid residues in oligosaccharides, glycoproteins, glycolipids, colominic acid and synthetic substrates.. With respect to regulation, inhibited by the neuraminidase inhibitors zanamivir (Relenza) and oseltamivir (Tamiflu). These drugs interfere with the release of progeny virus from infected cells and are effective against all influenza strains. Resistance to neuraminidase inhibitors is quite rare. Its function is as follows. Catalyzes the removal of terminal sialic acid residues from viral and cellular glycoconjugates. Cleaves off the terminal sialic acids on the glycosylated HA during virus budding to facilitate virus release. Additionally helps virus spread through the circulation by further removing sialic acids from the cell surface. These cleavages prevent self-aggregation and ensure the efficient spread of the progeny virus from cell to cell. Otherwise, infection would be limited to one round of replication. Described as a receptor-destroying enzyme because it cleaves a terminal sialic acid from the cellular receptors. May facilitate viral invasion of the upper airways by cleaving the sialic acid moieties on the mucin of the airway epithelial cells. Likely to plays a role in the budding process through its association with lipid rafts during intracellular transport. May additionally display a raft-association independent effect on budding. Plays a role in the determination of host range restriction on replication and virulence. Sialidase activity in late endosome/lysosome traffic seems to enhance virus replication. This chain is Neuraminidase, found in Aves (Human).